Consider the following 340-residue polypeptide: Phosphoribosylformylglycinamidine cyclo-ligase (340 aa).

This sequence belongs to the AIR synthase family.

Its subcellular location is the cytoplasm. It carries out the reaction 2-formamido-N(1)-(5-O-phospho-beta-D-ribosyl)acetamidine + ATP = 5-amino-1-(5-phospho-beta-D-ribosyl)imidazole + ADP + phosphate + H(+). The protein operates within purine metabolism; IMP biosynthesis via de novo pathway; 5-amino-1-(5-phospho-D-ribosyl)imidazole from N(2)-formyl-N(1)-(5-phospho-D-ribosyl)glycinamide: step 2/2. This is Phosphoribosylformylglycinamidine cyclo-ligase from Streptococcus pyogenes serotype M1.